Reading from the N-terminus, the 355-residue chain is Phenylalanine--tRNA ligase alpha subunit (355 aa).

Mg(2+) is bound at residue glutamate 273.

It belongs to the class-II aminoacyl-tRNA synthetase family. Phe-tRNA synthetase alpha subunit type 1 subfamily. In terms of assembly, tetramer of two alpha and two beta subunits. The cofactor is Mg(2+).

It localises to the cytoplasm. The enzyme catalyses tRNA(Phe) + L-phenylalanine + ATP = L-phenylalanyl-tRNA(Phe) + AMP + diphosphate + H(+). In Bifidobacterium adolescentis (strain ATCC 15703 / DSM 20083 / NCTC 11814 / E194a), this protein is Phenylalanine--tRNA ligase alpha subunit.